The following is a 249-amino-acid chain: Octanoyltransferase (249 aa).

Residues 1-23 form a disordered region; it reads MVNSPQNPRQDQRQDLDLTSFSA. A BPL/LPL catalytic domain is found at 57 to 241; it reads GEAPELVWLL…AFEELFGPTR (185 aa). Residues 95-102, 170-172, and 183-185 each bind substrate; these read RGGQLTYH, AIG, and GIA. Cys-201 (acyl-thioester intermediate) is an active-site residue.

The protein belongs to the LipB family.

The protein resides in the cytoplasm. It catalyses the reaction octanoyl-[ACP] + L-lysyl-[protein] = N(6)-octanoyl-L-lysyl-[protein] + holo-[ACP] + H(+). It functions in the pathway protein modification; protein lipoylation via endogenous pathway; protein N(6)-(lipoyl)lysine from octanoyl-[acyl-carrier-protein]: step 1/2. In terms of biological role, catalyzes the transfer of endogenously produced octanoic acid from octanoyl-acyl-carrier-protein onto the lipoyl domains of lipoate-dependent enzymes. Lipoyl-ACP can also act as a substrate although octanoyl-ACP is likely to be the physiological substrate. The sequence is that of Octanoyltransferase from Bradyrhizobium diazoefficiens (strain JCM 10833 / BCRC 13528 / IAM 13628 / NBRC 14792 / USDA 110).